A 292-amino-acid chain; its full sequence is Ventral anterior homeobox 2 (292 aa).

Basic and acidic residues predominate over residues 1–36 (MGDGGAERDRGPKRREEPGGRSGCRGEHRGAEDLRA). Residues 1–74 (MGDGGAERDR…DGQQALGETD (74 aa)) form a disordered region. Polar residues predominate over residues 38–55 (TGSTSPREIAGTSASSPA). The segment at residues 102–161 (PKRTRTSFTAEQLYRLEMEFQRCQYVVGRERTELARQLNLSETQVKVWFQNRRTKQKKDQ) is a DNA-binding region (homeobox). The tract at residues 212–241 (AGHRGTSLGDPRNSSQRLNPMPSASASSPL) is disordered.

It belongs to the EMX homeobox family.

Its subcellular location is the nucleus. Functionally, transcription factor that may function in dorsoventral specification of the forebrain. Regulates the expression of Wnt signaling antagonists including the expression of a truncated TCF7L2 isoform that cannot bind CTNNB1 and acts therefore as a potent dominant-negative Wnt antagonist. Plays a crucial role in eye development and, in particular, in the specification of the ventral optic vesicle. May be a regulator of axial polarization in the retina. This Rattus norvegicus (Rat) protein is Ventral anterior homeobox 2 (Vax2).